Reading from the N-terminus, the 727-residue chain is Long-chain-fatty-acid--[acyl-carrier-protein] ligase AEE15, chloroplastic (727 aa).

The N-terminal 66 residues, 1–66, are a transit peptide targeting the chloroplast; it reads MQIRLKPDYS…PSFRRFRVHC (66 aa).

This sequence belongs to the ATP-dependent AMP-binding enzyme family.

It localises to the plastid. The protein resides in the chloroplast. It carries out the reaction a long-chain fatty acid + holo-[ACP] + ATP = a long-chain fatty acyl-[ACP] + AMP + diphosphate. In terms of biological role, probably involved in the activation of fatty acids to acyl-carrier-protein prior to fatty acid elongation in plastids. Acts on medium- to long-chain fatty acids. The protein is Long-chain-fatty-acid--[acyl-carrier-protein] ligase AEE15, chloroplastic (AAE15) of Arabidopsis thaliana (Mouse-ear cress).